The sequence spans 249 residues: 3-deoxy-manno-octulosonate cytidylyltransferase (249 aa).

This sequence belongs to the KdsB family.

The protein localises to the cytoplasm. The catalysed reaction is 3-deoxy-alpha-D-manno-oct-2-ulosonate + CTP = CMP-3-deoxy-beta-D-manno-octulosonate + diphosphate. It functions in the pathway nucleotide-sugar biosynthesis; CMP-3-deoxy-D-manno-octulosonate biosynthesis; CMP-3-deoxy-D-manno-octulosonate from 3-deoxy-D-manno-octulosonate and CTP: step 1/1. The protein operates within bacterial outer membrane biogenesis; lipopolysaccharide biosynthesis. Functionally, activates KDO (a required 8-carbon sugar) for incorporation into bacterial lipopolysaccharide in Gram-negative bacteria. This chain is 3-deoxy-manno-octulosonate cytidylyltransferase, found in Photorhabdus laumondii subsp. laumondii (strain DSM 15139 / CIP 105565 / TT01) (Photorhabdus luminescens subsp. laumondii).